A 273-amino-acid polypeptide reads, in one-letter code: Formamidopyrimidine-DNA glycosylase (273 aa).

Pro2 functions as the Schiff-base intermediate with DNA in the catalytic mechanism. Glu3 acts as the Proton donor in catalysis. Lys60 acts as the Proton donor; for beta-elimination activity in catalysis. The DNA site is built by His94, Arg113, and Arg154. The FPG-type zinc finger occupies Asn239 to Arg273. Arg263 acts as the Proton donor; for delta-elimination activity in catalysis.

The protein belongs to the FPG family. Monomer. Zn(2+) serves as cofactor.

It carries out the reaction Hydrolysis of DNA containing ring-opened 7-methylguanine residues, releasing 2,6-diamino-4-hydroxy-5-(N-methyl)formamidopyrimidine.. It catalyses the reaction 2'-deoxyribonucleotide-(2'-deoxyribose 5'-phosphate)-2'-deoxyribonucleotide-DNA = a 3'-end 2'-deoxyribonucleotide-(2,3-dehydro-2,3-deoxyribose 5'-phosphate)-DNA + a 5'-end 5'-phospho-2'-deoxyribonucleoside-DNA + H(+). In terms of biological role, involved in base excision repair of DNA damaged by oxidation or by mutagenic agents. Acts as a DNA glycosylase that recognizes and removes damaged bases. Has a preference for oxidized purines, such as 7,8-dihydro-8-oxoguanine (8-oxoG). Has AP (apurinic/apyrimidinic) lyase activity and introduces nicks in the DNA strand. Cleaves the DNA backbone by beta-delta elimination to generate a single-strand break at the site of the removed base with both 3'- and 5'-phosphates. This chain is Formamidopyrimidine-DNA glycosylase, found in Roseiflexus sp. (strain RS-1).